The chain runs to 415 residues: ATP-dependent RNA helicase RhlB (415 aa).

A Q motif motif is present at residues 9–37 (QRFSALPLHPIVRGALAKKGFDFCTPIQA). Residues 40 to 218 (LPISLNGRDV…FEDMNDPEYI (179 aa)) form the Helicase ATP-binding domain. An ATP-binding site is contributed by 53–60 (AQTGTGKT). Positions 164 to 167 (DEAD) match the DEAD box motif. The Helicase C-terminal domain maps to 241–389 (DKMALLLTLM…VSQYETEALL (149 aa)).

The protein belongs to the DEAD box helicase family. RhlB subfamily. As to quaternary structure, component of the RNA degradosome, which is a multiprotein complex involved in RNA processing and mRNA degradation.

The protein resides in the cytoplasm. It carries out the reaction ATP + H2O = ADP + phosphate + H(+). DEAD-box RNA helicase involved in RNA degradation. Has RNA-dependent ATPase activity and unwinds double-stranded RNA. The sequence is that of ATP-dependent RNA helicase RhlB from Haemophilus influenzae (strain PittGG).